A 424-amino-acid chain; its full sequence is Appressorium protein ROW1 (424 aa).

The signal sequence occupies residues 1–21 (MTKLTLTVALVSALLASGASA). Disordered regions lie at residues 19-54 (ASAQ…WQPK), 69-90 (ANRI…GYNT), 278-304 (SGST…CSSV), and 327-398 (SSSA…TQGA). The Extracellular segment spans residues 22 to 403 (QQPTGTGNGP…NTQGAASSAS (382 aa)). Residues 37–54 (TDLNRNQPTKSWTQWQPK) are compositionally biased toward polar residues. Composition is skewed to low complexity over residues 295–304 (APSSSQCSSV) and 327–347 (SSSA…SASS). A compositionally biased stretch (gly residues) spans 362-382 (SGTGSGSGSGSGSGSGSGSGS). Residues 383–398 (SSGSSSSGSSSNTQGA) are compositionally biased toward low complexity. Residues 404–424 (SLTISVGLAGLVAIGAAAFAL) form a helical membrane-spanning segment.

It localises to the cell membrane. The protein localises to the secreted. Functionally, plays a role in the formation of the appressorium, a specialized infection structure with the purpose of penetrating the host surface, and is required for proper remodeling of the appressorium wall and vesicle secretion. The chain is Appressorium protein ROW1 from Mycosarcoma maydis (Corn smut fungus).